The following is a 329-amino-acid chain: CDP-diacylglycerol--glycerol-3-phosphate 3-phosphatidyltransferase 1, chloroplastic (329 aa).

A chloroplast-targeting transit peptide spans 1–38 (MAFLKTLNPLLRRSPTPIPNPRSLLSLDAFLAASSPTA). Transmembrane regions (helical) follow at residues 150-170 (PVIGWMIVNEWYLPAFGTLAL), 190-210 (VFGSYLDPLADKVLIGCVAIA), 217-237 (LHPGLVGLVVVRDLLLVGGAV), and 300-320 (ITVLSWLVASTTIASTVGYGI).

The protein belongs to the CDP-alcohol phosphatidyltransferase class-I family. Mn(2+) serves as cofactor.

Its subcellular location is the plastid. It is found in the chloroplast membrane. The enzyme catalyses a CDP-1,2-diacyl-sn-glycerol + sn-glycerol 3-phosphate = a 1,2-diacyl-sn-glycero-3-phospho-(1'-sn-glycero-3'-phosphate) + CMP + H(+). It functions in the pathway phospholipid metabolism; phosphatidylglycerol biosynthesis; phosphatidylglycerol from CDP-diacylglycerol: step 1/2. In terms of biological role, catalyzes the committed step to the synthesis of the acidic phospholipids. Transfers specifically a phosphatidyl group from CDP-diacylglycerol to glycerol-3-phosphate to form phosphatidylglycerophosphate. In Oryza sativa subsp. japonica (Rice), this protein is CDP-diacylglycerol--glycerol-3-phosphate 3-phosphatidyltransferase 1, chloroplastic.